Consider the following 184-residue polypeptide: MLTMKDVIREGDPILRNVAEEVVIPASEEDTNTLKEMIEFVINSQDPEMAEKYSLRPGIGLAAPQIGISKKMIAVHVTDTDGTLYSHALFNPKIISHSVERTYLQSGEGCLSVDREVPGYVPRYTRITVKATSINGEEVKLRLKGLPAIVFQHEIDHLNGVMFYDHINKENPFAAPDGSKPLER.

2 residues coordinate Fe cation: cysteine 110 and histidine 153. The active site involves glutamate 154. Histidine 157 serves as a coordination point for Fe cation.

It belongs to the polypeptide deformylase family. Fe(2+) serves as cofactor.

The catalysed reaction is N-terminal N-formyl-L-methionyl-[peptide] + H2O = N-terminal L-methionyl-[peptide] + formate. In terms of biological role, removes the formyl group from the N-terminal Met of newly synthesized proteins. Requires at least a dipeptide for an efficient rate of reaction. N-terminal L-methionine is a prerequisite for activity but the enzyme has broad specificity at other positions. This chain is Peptide deformylase 2, found in Bacillus anthracis.